We begin with the raw amino-acid sequence, 353 residues long: Phenol hydroxylase P5 protein (353 aa).

Positions 3–93 constitute a 2Fe-2S ferredoxin-type domain; the sequence is YQVTIEPIGT…DMVIEADVDE (91 aa). [2Fe-2S] cluster contacts are provided by cysteine 37, cysteine 42, cysteine 45, and cysteine 77. The region spanning 102–201 is the FAD-binding FR-type domain; that stretch reads VQDYQATVIE…SGPYGQFFVR (100 aa).

In terms of assembly, the multicomponent enzyme phenol hydroxylase is formed by P0, P1, P2, P3, P4 and P5 polypeptides. It depends on FAD as a cofactor. [2Fe-2S] cluster is required as a cofactor.

The enzyme catalyses phenol + NADPH + O2 + H(+) = catechol + NADP(+) + H2O. It functions in the pathway aromatic compound metabolism; phenol degradation. Its function is as follows. Catabolizes phenol, and some of its methylated derivatives. P5 is required for growth on phenol, and for in vitro phenol hydroxylase activity. Functionally, probable electron transfer from NADPH, via FAD and the 2Fe-2S center, to the oxygenase activity site of the enzyme. This chain is Phenol hydroxylase P5 protein (mphP), found in Acinetobacter pittii (strain PHEA-2).